Here is a 1770-residue protein sequence, read N- to C-terminus: Transposon Ty2-OR2 Gag-Pol polyprotein (1770 aa).

Disordered stretches follow at residues 1 to 88 and 359 to 449; these read MESQ…YQQH and QHSE…SNDE. 2 stretches are compositionally biased toward polar residues: residues 19 to 39 and 49 to 60; these read ASVTSKEVPSNQDPLAVSASN and KVNSQEETTPGT. The RNA-binding stretch occupies residues 295–397; the sequence is ENNINVSDRL…SSKPRAAKAH (103 aa). The span at 369 to 381 shows a compositional bias: low complexity; that stretch reads TSPNTTNTKVTTR. 2 stretches are compositionally biased toward polar residues: residues 399 to 408 and 415 to 435; these read IATSSKFSRV and ESTVSSQYLSDDNELSLGQQQ. The active-site For protease activity; shared with dimeric partner is Asp457. The interval 579–636 is integrase-type zinc finger-like; it reads NVNKSKSVNKYPYPLIHRMLGHANFRSIQKSLKKNAVTYLKESDIEWSNASTYQCPDC. Positions 656 to 831 constitute an Integrase catalytic domain; sequence ESYEPFQYLH…AGLDITTILP (176 aa). The Mg(2+) site is built by Asp667 and Asp732. 4 disordered regions span residues 1005 to 1038, 1057 to 1135, 1146 to 1165, and 1170 to 1205; these read GGTIESDTTSPRHSSTFTARNQKRPGSPNDMIDL, GGTE…KSSK, LPLPDLTHKSPTDTSDVSKD, and HSRQTNSSLGGMDDSNVLTTTKSKKRSLEDNETEIE. Composition is skewed to polar residues over residues 1009–1024 and 1065–1082; these read ESDTTSPRHSSTFTAR and QRNSDTNIKYRTTNSTPS. The span at 1151–1165 shows a compositional bias: basic and acidic residues; that stretch reads LTHKSPTDTSDVSKD. The short motif at 1193 to 1227 is the Bipartite nuclear localization signal element; sequence KKRSLEDNETEIEVSRDTWNNKNMRSLEPPRSKKR. In terms of domain architecture, Reverse transcriptase Ty1/copia-type spans 1353-1491; the sequence is NDYYITQLDI…DILGLEIKYQ (139 aa). Mg(2+)-binding residues include Asp1361, Asp1442, Asp1443, Asp1625, Glu1667, and Asp1700. An RNase H Ty1/copia-type domain is found at 1625 to 1767; that stretch reads DASYGNQPYY…IKTFKLLTNK (143 aa).

The capsid protein forms a homotrimer, from which the VLPs are assembled. The protease is a homodimer, whose active site consists of two apposed aspartic acid residues. Initially, virus-like particles (VLPs) are composed of the structural unprocessed proteins Gag and Gag-Pol, and also contain the host initiator methionine tRNA (tRNA(i)-Met) which serves as a primer for minus-strand DNA synthesis, and a dimer of genomic Ty RNA. Processing of the polyproteins occurs within the particle and proceeds by an ordered pathway, called maturation. First, the protease (PR) is released by autocatalytic cleavage of the Gag-Pol polyprotein, and this cleavage is a prerequisite for subsequent processing at the remaining sites to release the mature structural and catalytic proteins. Maturation takes place prior to the RT reaction and is required to produce transposition-competent VLPs.

It is found in the cytoplasm. The protein resides in the nucleus. It carries out the reaction DNA(n) + a 2'-deoxyribonucleoside 5'-triphosphate = DNA(n+1) + diphosphate. It catalyses the reaction Endonucleolytic cleavage to 5'-phosphomonoester.. Its function is as follows. Capsid protein (CA) is the structural component of the virus-like particle (VLP), forming the shell that encapsulates the retrotransposons dimeric RNA genome. The particles are assembled from trimer-clustered units and there are holes in the capsid shells that allow for the diffusion of macromolecules. CA also has nucleocapsid-like chaperone activity, promoting primer tRNA(i)-Met annealing to the multipartite primer-binding site (PBS), dimerization of Ty2 RNA and initiation of reverse transcription. In terms of biological role, the aspartyl protease (PR) mediates the proteolytic cleavages of the Gag and Gag-Pol polyproteins after assembly of the VLP. Reverse transcriptase/ribonuclease H (RT) is a multifunctional enzyme that catalyzes the conversion of the retro-elements RNA genome into dsDNA within the VLP. The enzyme displays a DNA polymerase activity that can copy either DNA or RNA templates, and a ribonuclease H (RNase H) activity that cleaves the RNA strand of RNA-DNA heteroduplexes during plus-strand synthesis and hydrolyzes RNA primers. The conversion leads to a linear dsDNA copy of the retrotransposon that includes long terminal repeats (LTRs) at both ends. Functionally, integrase (IN) targets the VLP to the nucleus, where a subparticle preintegration complex (PIC) containing at least integrase and the newly synthesized dsDNA copy of the retrotransposon must transit the nuclear membrane. Once in the nucleus, integrase performs the integration of the dsDNA into the host genome. This Saccharomyces cerevisiae (strain ATCC 204508 / S288c) (Baker's yeast) protein is Transposon Ty2-OR2 Gag-Pol polyprotein (TY2B-OR2).